Here is a 617-residue protein sequence, read N- to C-terminus: Prothrombin (617 aa).

The N-terminal stretch at 1–24 (MLHVRGLGLPGCLALAALASLVHS) is a signal peptide. The propeptide occupies 25–43 (QHVFLAPQQALSLLQRVRR). The 47-residue stretch at 44-90 (ANSGFLEELRKGNLERECVEEQCSYEEAFEALESPQDTDVFWAKYTV) folds into the Gla domain. Residues Glu50, Glu51, Glu58, Glu60, Glu63, Glu64, Glu69, Glu70, Glu73, and Glu76 each carry the 4-carboxyglutamate modification. Cysteines 61 and 66 form a disulfide. Cystine bridges form between Cys91/Cys104, Cys109/Cys187, Cys130/Cys170, Cys158/Cys182, Cys215/Cys292, Cys236/Cys276, Cys264/Cys287, Cys332/Cys478, Cys387/Cys403, and Cys532/Cys546. 2 consecutive Kringle domains span residues 109-187 (CAMD…IPVC) and 215-292 (CLLE…LNYC). N-linked (GlcNAc...) asparagine glycans are attached at residues Asn120 and Asn144. Positions 360–614 (IVEGWDAEKG…LKRWMQKVID (255 aa)) constitute a Peptidase S1 domain. The active-site Charge relay system is the His402. Residue Asn412 is glycosylated (N-linked (GlcNAc...) asparagine). Asp458 acts as the Charge relay system in catalysis. Positions 547 to 569 (AGFKVNDTKRGDACEGDSGGPFV) are high affinity receptor-binding region which is also known as the TP508 peptide. N-linked (GlcNAc...) asparagine glycosylation occurs at Asn552. Residues Cys560 and Cys590 are joined by a disulfide bond. The active-site Charge relay system is Ser564.

This sequence belongs to the peptidase S1 family. Heterodimer (named alpha-thrombin) of a light and a heavy chain; disulfide-linked. Forms a heterodimer with SERPINA5. In plasma, interacts (via N-terminus) with alpha-1-microglobulin; this interaction does not prevent the activation of prothrombin to thrombin. In terms of processing, the gamma-carboxyglutamyl residues, which bind calcium ions, result from the carboxylation of glutamyl residues by a microsomal enzyme, the vitamin K-dependent carboxylase. The modified residues are necessary for the calcium-dependent interaction with a negatively charged phospholipid surface, which is essential for the conversion of prothrombin to thrombin. Post-translationally, in the penultimate step of the coagulation cascade, prothrombin is converted to thrombin by the prothrombinase complex composed of factor Xa (F10), cofactor Va (F5), and phospholipids. This activation requires factor Xa-catalyzed sequential cleavage at 2 sites, Arg-310 and Arg-359, along 2 possible pathways. In the first pathway, the first cleavage occurs at Arg-310, leading to the formation of the inactive intermediate prethrombin-2. This pathway preferentially occurs on platelets and in the absence of cofactor Va. In the second pathway, the first cleavage occurs at Arg-359, which separates protease domain into 2 chains that remain connected through a disulfide bond and generates the active intermediate meizothrombin. The presence of cofactor Va directs activation along the meizothrombin pathway and greatly accelerates the rate of cleavage at Arg-359, but has a smaller effect on the cleavage of meizothrombin at Arg-310. Meizothrombin accumulates as an intermediate when prothrombinase is assembled on the membrane of red blood cells.

The enzyme catalyses Selective cleavage of Arg-|-Gly bonds in fibrinogen to form fibrin and release fibrinopeptides A and B.. Activity is promoted in the presence of negatively charged surfaces, such as polyphosphate and dextran sulfate. Inhibited by SERPINA5. Its function is as follows. Thrombin, which cleaves bonds after Arg and Lys, converts fibrinogen to fibrin and activates factors V, VII, VIII, XIII, and, in complex with thrombomodulin, protein C. Functions in blood homeostasis, inflammation and wound healing. Activates coagulation factor XI (F11); activation is promoted by the contact with negatively charged surfaces. Triggers the production of pro-inflammatory cytokines, such as MCP-1/CCL2 and IL8/CXCL8, in endothelial cells. In Rattus norvegicus (Rat), this protein is Prothrombin (F2).